The chain runs to 338 residues: Phenylalanine--tRNA ligase alpha subunit (338 aa).

Glu253 is a Mg(2+) binding site.

Belongs to the class-II aminoacyl-tRNA synthetase family. Phe-tRNA synthetase alpha subunit type 1 subfamily. In terms of assembly, tetramer of two alpha and two beta subunits. Mg(2+) serves as cofactor.

The protein localises to the cytoplasm. The enzyme catalyses tRNA(Phe) + L-phenylalanine + ATP = L-phenylalanyl-tRNA(Phe) + AMP + diphosphate + H(+). This Pelobacter propionicus (strain DSM 2379 / NBRC 103807 / OttBd1) protein is Phenylalanine--tRNA ligase alpha subunit.